A 371-amino-acid chain; its full sequence is L-lysine 4-hydroxylase (371 aa).

Fe cation is bound by residues His174, Glu176, and His310.

The protein belongs to the clavaminate synthase family. Requires Fe(2+) as cofactor.

It carries out the reaction L-lysine + 2-oxoglutarate + O2 = (4R)-4-hydroxy-L-lysine + succinate + CO2. Functionally, alpha-ketoglutarate-dependent dioxygenase that in vitro catalyzes the regio- and stereoselective hydroxylation of L-lysine, leading to (4R)-4-hydroxy-L-lysine. This Niastella koreensis (strain DSM 17620 / KACC 11465 / NBRC 106392 / GR20-10) protein is L-lysine 4-hydroxylase.